The chain runs to 353 residues: Probable butyrate kinase (353 aa).

Belongs to the acetokinase family.

The protein resides in the cytoplasm. It carries out the reaction butanoate + ATP = butanoyl phosphate + ADP. The sequence is that of Probable butyrate kinase from Bacteroides thetaiotaomicron (strain ATCC 29148 / DSM 2079 / JCM 5827 / CCUG 10774 / NCTC 10582 / VPI-5482 / E50).